The following is a 136-amino-acid chain: Histone H3, embryonic (136 aa).

Residues 1-43 form a disordered region; the sequence is MARTKQTARKSTGGKAPRKQLATKAARKSAPATGGVKKPHRYR. Lys-5 is modified (N6-methylated lysine). Residue Lys-10 is modified to N6-acetyllysine; alternate. Lys-10 carries the post-translational modification N6-methylated lysine; alternate. Residue Ser-11 is modified to Phosphoserine. 2 positions are modified to N6-acetyllysine: Lys-15 and Lys-24. N6-methylated lysine occurs at positions 28, 37, and 80.

Belongs to the histone H3 family. As to quaternary structure, the nucleosome is a histone octamer containing two molecules each of H2A, H2B, H3 and H4 assembled in one H3-H4 heterotetramer and two H2A-H2B heterodimers. The octamer wraps approximately 147 bp of DNA. Post-translationally, acetylation is generally linked to gene activation. Methylation at Lys-5 is linked to gene activation. Methylation at Lys-10 is linked to gene repression.

Its subcellular location is the nucleus. It localises to the chromosome. Functionally, core component of nucleosome. Nucleosomes wrap and compact DNA into chromatin, limiting DNA accessibility to the cellular machineries which require DNA as a template. Histones thereby play a central role in transcription regulation, DNA repair, DNA replication and chromosomal stability. DNA accessibility is regulated via a complex set of post-translational modifications of histones, also called histone code, and nucleosome remodeling. This chain is Histone H3, embryonic, found in Paracentrotus lividus (Common sea urchin).